Here is a 115-residue protein sequence, read N- to C-terminus: Large ribosomal subunit protein bL19 (115 aa).

It belongs to the bacterial ribosomal protein bL19 family.

Its function is as follows. This protein is located at the 30S-50S ribosomal subunit interface and may play a role in the structure and function of the aminoacyl-tRNA binding site. This is Large ribosomal subunit protein bL19 from Kosmotoga olearia (strain ATCC BAA-1733 / DSM 21960 / TBF 19.5.1).